The sequence spans 57 residues: Temporin-ALk (57 aa).

An N-terminal signal peptide occupies residues 1–22 (MFTLKKSLLLLFFLGTINLSLC). Positions 23–46 (EQERNAEEERRDDLGERQAEVEKR) are excised as a propeptide. Ser-56 is subject to Serine amide.

It belongs to the frog skin active peptide (FSAP) family. Temporin subfamily. As to expression, expressed by the skin glands.

The protein localises to the secreted. In terms of biological role, antimicrobial peptide with weak activity against Gram-positive and Gram-negative bacteria and against fungi. Has been tested against S.aureus (MIC=15.0 ug/mL), B.pumilus (no activity detected), B.cereus (no activity detected), E.coli (MIC=30.0 ug/mL), B.dysenteriae (MIC=60.0 ug/mL), A.cacoaceticus (MIC=75.0 ug/mL), P.aeruginosa (MIC=25.0 ug/mL) and C.albicans (MIC=15.0 ug/mL). Also shows a weak hemolytic activity. This chain is Temporin-ALk, found in Amolops loloensis (Lolokou Sucker Frog).